Reading from the N-terminus, the 179-residue chain is Large ribosomal subunit protein uL5 (179 aa).

This sequence belongs to the universal ribosomal protein uL5 family. In terms of assembly, part of the 50S ribosomal subunit; part of the 5S rRNA/L5/L18/L25 subcomplex. Contacts the 5S rRNA and the P site tRNA. Forms a bridge to the 30S subunit in the 70S ribosome.

This is one of the proteins that bind and probably mediate the attachment of the 5S RNA into the large ribosomal subunit, where it forms part of the central protuberance. In the 70S ribosome it contacts protein S13 of the 30S subunit (bridge B1b), connecting the 2 subunits; this bridge is implicated in subunit movement. Contacts the P site tRNA; the 5S rRNA and some of its associated proteins might help stabilize positioning of ribosome-bound tRNAs. This chain is Large ribosomal subunit protein uL5, found in Nitrosomonas europaea (strain ATCC 19718 / CIP 103999 / KCTC 2705 / NBRC 14298).